A 110-amino-acid chain; its full sequence is uncharacterized protein (110 aa).

The next 3 membrane-spanning stretches (helical) occupy residues 5-25 (ILAI…PIHL), 62-82 (FPII…AIVS), and 90-110 (GISI…LISI).

This sequence to A.fulgidus AF1754.

The protein resides in the cell membrane. This is an uncharacterized protein from Methanocaldococcus jannaschii (strain ATCC 43067 / DSM 2661 / JAL-1 / JCM 10045 / NBRC 100440) (Methanococcus jannaschii).